The sequence spans 123 residues: U7 snRNA-associated Sm-like protein LSm10 (123 aa).

One can recognise a Sm domain in the interval Ser16–Val88.

It belongs to the snRNP Sm proteins family. In terms of assembly, component of the heptameric ring U7 snRNP complex, or U7 Sm protein core complex, at least composed of LSM10, LSM11, SNRPB, SNRPD3, SNRPE, SNRPF, SNRPG and U7 snRNA. Formation of the U7 snRNP is an ATP-dependent process mediated by a specialized SMN complex containing at least the Sm protein core complex and additionally, the U7-specific LSM10 and LSM11 proteins. Interacts with CLNS1A and SMN. Post-translationally, not methylated. Methylation is not necessary for interaction with SMN.

It is found in the nucleus. Its function is as follows. Appears to function in the U7 snRNP complex that is involved in histone 3'-end processing. Increases U7 snRNA levels but not histone 3'-end pre-mRNA processing activity, when overexpressed. Required for cell cycle progression from G1 to S phases. Binds specifically to U7 snRNA. Binds to the downstream cleavage product (DCP) of histone pre-mRNA in a U7 snRNP dependent manner. This chain is U7 snRNA-associated Sm-like protein LSm10 (LSM10), found in Homo sapiens (Human).